We begin with the raw amino-acid sequence, 121 residues long: uncharacterized protein (121 aa).

This is an uncharacterized protein from Schizosaccharomyces pombe (strain 972 / ATCC 24843) (Fission yeast).